The following is a 257-amino-acid chain: Hydroxyacylglutathione hydrolase (257 aa).

Residues His-56, His-58, Asp-60, His-61, His-112, Asp-131, and His-169 each contribute to the Zn(2+) site.

Belongs to the metallo-beta-lactamase superfamily. Glyoxalase II family. Monomer. Zn(2+) is required as a cofactor.

The catalysed reaction is an S-(2-hydroxyacyl)glutathione + H2O = a 2-hydroxy carboxylate + glutathione + H(+). It functions in the pathway secondary metabolite metabolism; methylglyoxal degradation; (R)-lactate from methylglyoxal: step 2/2. Thiolesterase that catalyzes the hydrolysis of S-D-lactoyl-glutathione to form glutathione and D-lactic acid. The chain is Hydroxyacylglutathione hydrolase from Ectopseudomonas mendocina (strain ymp) (Pseudomonas mendocina).